The sequence spans 3916 residues: Fusarin C synthetase (3916 aa).

One can recognise a Ketosynthase family 3 (KS3) domain in the interval 9–440; the sequence is KEPIAIIGTS…GTNVHAIIEQ (432 aa). Residues cysteine 182, histidine 319, and histidine 360 each act as for beta-ketoacyl synthase activity in the active site. The interval 548 to 869 is malonyl-CoA:ACP transacylase (MAT) domain; sequence VFTGQGAQWP…VTRNIHDVEA (322 aa). The segment at 935-1068 is N-terminal hotdog fold; sequence HPLLGARSVE…GQLRVEFSSL (134 aa). The segment at 935–1228 is dehydratase (DH) domain; sequence HPLLGARSVE…GLTCTSLLRP (294 aa). The PKS/mFAS DH domain occupies 935–1231; the sequence is HPLLGARSVE…CTSLLRPGPS (297 aa). The active-site Proton acceptor; for dehydratase activity is the histidine 967. The interval 1084 to 1231 is C-terminal hotdog fold; that stretch reads LTSVDMERFY…CTSLLRPGPS (148 aa). Catalysis depends on aspartate 1141, which acts as the Proton donor; for dehydratase activity. The segment at 1350–1584 is C-methyltransferase (CMeT) domain; the sequence is VGENLPAVVR…YMTSVMLSQA (235 aa). Residues 2092–2266 form a ketoreductase (KR) domain 1 region; that stretch reads TYLLIGFTGG…AASVMHIGMV (175 aa). The Carrier 1 domain occupies 2372–2449; that stretch reads EILAVVEEEF…ELCSTVVSHL (78 aa). Residue serine 2409 is modified to O-(pantetheine 4'-phosphoryl)serine. The segment at 2482–2511 is disordered; the sequence is ASPTENEPFTIRNSPNSTQVTSESGVDEET. Positions 2486–2505 are enriched in polar residues; it reads ENEPFTIRNSPNSTQVTSES. A condensation region spans residues 2522 to 2806; that stretch reads PLSFAQERLW…VNLLPLRLKL (285 aa). The tract at residues 2973 to 3385 is adenylation; it reads FEKCVVNQPD…RIAGDSQIKL (413 aa). The region spanning 3493–3570 is the Carrier 2 domain; the sequence is KPLTETQERL…EMAAKIDGFT (78 aa). O-(pantetheine 4'-phosphoryl)serine is present on serine 3530. The interval 3612 to 3833 is thiolester reductase (R) domain; sequence LTGATGFLGV…DFVPVDVVAA (222 aa).

It in the C-terminal section; belongs to the NRP synthetase family.

Its pathway is mycotoxin biosynthesis. Functionally, fusarin C synthetase; part of the gene cluster that mediates the biosynthesis of the mycotoxin fusarin C. Within the cluster, FUS1, FUS2, FUS8 and FUS9 are sufficient for fusarin production. The roles of the other FUS members are yet undetermined. The fusarin C synthetase FUS1 is responsible for the condensation of one acetyl-coenzyme A (CoA) unit with six malonyl-CoA units and the amide linkage of the arising heptaketide and homoserine, subsequently releasing the first intermediate, prefusarin, as an alcohol with an open ring structure. The cytochrome P450 monooxygenase FUS8 participates in multiple oxidation processes at carbon C-20 and is able to use the FUS1 product as substrate, resulting in formation of 20-hydroxy-prefusarin. This reaction seems to be essential before the 2-pyrrolidone ring closure can be catalyzed by FUS2, generating 20-hydroxy-fusarin. FUS8 is able to further oxidizes carbon C-20 after ring closure, resulting in the formation of carboxy-fusarin C. As the last step, FUS9 methylates the hydroxyl group at C-21 to generate fusarin C. Fusarin C can then rearrange to epi-fusarin C, the (z)-isomers, and fusarin A and fusarin D. This chain is Fusarin C synthetase, found in Gibberella moniliformis (strain M3125 / FGSC 7600) (Maize ear and stalk rot fungus).